The primary structure comprises 297 residues: Phosphatidylglycerol--prolipoprotein diacylglyceryl transferase (297 aa).

Helical transmembrane passes span 20 to 40 (FITI…GLFV), 57 to 77 (EILP…YVIF), 105 to 125 (AVWE…ISII), and 133 to 153 (INLK…QSIG). Arg-154 provides a ligand contact to a 1,2-diacyl-sn-glycero-3-phospho-(1'-sn-glycerol). Transmembrane regions (helical) follow at residues 193–213 (PTFL…IIIF), 225–245 (GFIS…IEGL), and 266–286 (AQFI…FLRL).

Belongs to the Lgt family.

It is found in the cell inner membrane. It catalyses the reaction L-cysteinyl-[prolipoprotein] + a 1,2-diacyl-sn-glycero-3-phospho-(1'-sn-glycerol) = an S-1,2-diacyl-sn-glyceryl-L-cysteinyl-[prolipoprotein] + sn-glycerol 1-phosphate + H(+). It participates in protein modification; lipoprotein biosynthesis (diacylglyceryl transfer). Its function is as follows. Catalyzes the transfer of the diacylglyceryl group from phosphatidylglycerol to the sulfhydryl group of the N-terminal cysteine of a prolipoprotein, the first step in the formation of mature lipoproteins. The sequence is that of Phosphatidylglycerol--prolipoprotein diacylglyceryl transferase from Prochlorococcus marinus (strain MIT 9215).